We begin with the raw amino-acid sequence, 390 residues long: Queuine tRNA-ribosyltransferase (390 aa).

Asp-92 acts as the Proton acceptor in catalysis. Substrate is bound by residues 92 to 96, Asp-146, Gln-195, and Gly-222; that span reads DSGGF. The segment at 253-259 is RNA binding; the sequence is GVGTPED. The active-site Nucleophile is Asp-272. The interval 277-281 is RNA binding; important for wobble base 34 recognition; sequence TRNAR. Cys-310, Cys-312, Cys-315, and His-354 together coordinate Zn(2+).

It belongs to the queuine tRNA-ribosyltransferase family. In terms of assembly, homodimer. Within each dimer, one monomer is responsible for RNA recognition and catalysis, while the other monomer binds to the replacement base PreQ1. The cofactor is Zn(2+).

The catalysed reaction is 7-aminomethyl-7-carbaguanine + guanosine(34) in tRNA = 7-aminomethyl-7-carbaguanosine(34) in tRNA + guanine. Its pathway is tRNA modification; tRNA-queuosine biosynthesis. Catalyzes the base-exchange of a guanine (G) residue with the queuine precursor 7-aminomethyl-7-deazaguanine (PreQ1) at position 34 (anticodon wobble position) in tRNAs with GU(N) anticodons (tRNA-Asp, -Asn, -His and -Tyr). Catalysis occurs through a double-displacement mechanism. The nucleophile active site attacks the C1' of nucleotide 34 to detach the guanine base from the RNA, forming a covalent enzyme-RNA intermediate. The proton acceptor active site deprotonates the incoming PreQ1, allowing a nucleophilic attack on the C1' of the ribose to form the product. After dissociation, two additional enzymatic reactions on the tRNA convert PreQ1 to queuine (Q), resulting in the hypermodified nucleoside queuosine (7-(((4,5-cis-dihydroxy-2-cyclopenten-1-yl)amino)methyl)-7-deazaguanosine). This is Queuine tRNA-ribosyltransferase from Verminephrobacter eiseniae (strain EF01-2).